The chain runs to 542 residues: DNA-binding protein modulo (542 aa).

Positions 1-166 (MAQKKAVTVK…RGIPKVKVGK (166 aa)) are disordered. A phosphoserine mark is found at Ser42 and Ser44. The segment covering 59–114 (SEEDESDVEEQNDEQPGDDSDFETEEAAGLIDDEAEEDEEYNSDDEEDDDDDELEP) has biased composition (acidic residues). Residues Ser120, Ser129, and Ser142 each carry the phosphoserine modification. Residues 123-135 (ADEVDESDDDEEA) show a composition bias toward acidic residues. Residues 136 to 158 (PVEKPVSKKSEKANSEKSEENRG) are compositionally biased toward basic and acidic residues. 4 consecutive RRM domains span residues 175-251 (QIVF…QPRN), 258-331 (RTVV…RISQ), 340-429 (LTLV…NLTS), and 420-489 (RAIL…PNSL). Ser304 bears the Phosphoserine mark. Ser330 carries the post-translational modification Phosphoserine; by PKA. Position 443 is a phosphoserine (Ser443). A disordered region spans residues 505–542 (RAPRKFQKDTKPNFGKKPFNKRPAQENGGKSFVKRARF).

In terms of processing, the N-terminus is blocked.

It localises to the nucleus. In terms of biological role, its capacity to bind DNA and protein(s), and its differential expression during development suggest a role in the regulation of gene expression during Drosophila development. It could, in interaction with other factors, be required for the translation of instructions provided by pattern forming genes and controls, via chromatin changes, the activity of genes critical for the process of morphogenesis of several embryonic territories. This is DNA-binding protein modulo (mod) from Drosophila melanogaster (Fruit fly).